A 223-amino-acid chain; its full sequence is Putative synaptogyrin-2 like protein (223 aa).

Met-1 bears the N-acetylmethionine mark. Phosphoserine is present on Ser-3. The MARVEL domain maps to 20-170; that stretch reads FLTQPQVVAR…LASLTYQRYK (151 aa). The next 4 helical transmembrane spans lie at 26-46, 71-91, 104-124, and 146-166; these read VVAR…IYGE, GSAI…DAYF, VIGD…GFCF, and AAIT…SLTY. The interval 197-223 is disordered; sequence ASVDNYQQPPFTQNAETTEGYQPPPVY. Residues 200-216 are compositionally biased toward polar residues; it reads DNYQQPPFTQNAETTEG.

Belongs to the synaptogyrin family.

Its subcellular location is the membrane. This is Putative synaptogyrin-2 like protein from Homo sapiens (Human).